We begin with the raw amino-acid sequence, 1032 residues long: tRNA wybutosine-synthesizing protein 4 (1032 aa).

S-adenosyl-L-methionine is bound by residues arginine 69, glycine 95, aspartate 122, 169-170, and glutamate 196; that span reads DL. The disordered stretch occupies residues 702–726; sequence ESVEPNKSQSEKATSKPSAQSQNEP. Over residues 716-725 the composition is skewed to polar residues; it reads SKPSAQSQNE. A JmjC domain is found at 833–988; it reads PTKLPANLAV…AAGRDVYGNR (156 aa).

It belongs to the methyltransferase superfamily. LCMT family.

It catalyses the reaction 7-[(3S)-3-amino-3-carboxypropyl]wyosine(37) in tRNA(Phe) + S-adenosyl-L-methionine = 7-[(3S)-(3-amino-3-methoxycarbonyl)propyl]wyosine(37) in tRNA(Phe) + S-adenosyl-L-homocysteine. It carries out the reaction 7-[(3S)-(3-amino-3-methoxycarbonyl)propyl]wyosine(37) in tRNA(Phe) + S-adenosyl-L-methionine + CO2 = wybutosine(37) in tRNA(Phe) + S-adenosyl-L-homocysteine + 2 H(+). Its pathway is tRNA modification; wybutosine-tRNA(Phe) biosynthesis. Functionally, probable S-adenosyl-L-methionine-dependent methyltransferase that acts as a component of the wybutosine biosynthesis pathway. Wybutosine is a hyper modified guanosine with a tricyclic base found at the 3'-position adjacent to the anticodon of eukaryotic phenylalanine tRNA. May methylate the carboxyl group of leucine residues to form alpha-leucine ester residues. The chain is tRNA wybutosine-synthesizing protein 4 (ppm2) from Aspergillus oryzae (strain ATCC 42149 / RIB 40) (Yellow koji mold).